We begin with the raw amino-acid sequence, 363 residues long: MMHITHLDIRNFRNLKHIELHPSKGVNILSGANSSGKTSFLEAIYLLGLGRSFRTVQLISAIQAGMESLRVVAKVKQVGGSHTAGVEFGPAGFRARINKDTVKKRSQLATQLPLLYMSSYSHVVLDGGPRYRRQWLDWSLFHLEPGFHDLWWCYQRTLKQRNHVLRVHKPSWQQEINAWNKKLSTYGEQITSLREAILFKLQDSVSQLFTALAHQPISPVTMEFKQGWARTVRLEEILNESLNYDRAAGYTRYGPHRAEVAFYVDGKDVREILSRGQQKVFCYSLALSQANLLYRTKEQNCIFLIDDFTSELDADHRKRLLTLLNKLGMQVFATTIESLGSEIKAHPNIKEFHVKLGQVEEMV.

Residue 31 to 38 (GANSSGKT) participates in ATP binding.

This sequence belongs to the RecF family.

It localises to the cytoplasm. Functionally, the RecF protein is involved in DNA metabolism; it is required for DNA replication and normal SOS inducibility. RecF binds preferentially to single-stranded, linear DNA. It also seems to bind ATP. In Nitrosococcus oceani (strain ATCC 19707 / BCRC 17464 / JCM 30415 / NCIMB 11848 / C-107), this protein is DNA replication and repair protein RecF.